The following is a 59-amino-acid chain: Cecropin-C (59 aa).

Positions 1 to 23 (MNFKLIFLVALVLMAAFLGQTEG) are cleaved as a signal peptide. Valine 58 carries the valine amide modification.

It belongs to the cecropin family.

It is found in the secreted. Cecropins have lytic and antibacterial activity against several Gram-positive and Gram-negative bacteria. This Anopheles gambiae (African malaria mosquito) protein is Cecropin-C (CecC).